The primary structure comprises 236 residues: Probable metal transport system ATP-binding protein CT_416 (236 aa).

One can recognise an ABC transporter domain in the interval 5-236; the sequence is MLLENVSFRY…FCCNTFGRCP (232 aa). 39–46 contributes to the ATP binding site; the sequence is GPNGGGKT.

It belongs to the ABC transporter superfamily.

The protein localises to the cell inner membrane. In terms of biological role, part of an ATP-driven transport system CT_415/CT_416/CT_417 for a metal. Probably responsible for energy coupling to the transport system. This chain is Probable metal transport system ATP-binding protein CT_416, found in Chlamydia trachomatis serovar D (strain ATCC VR-885 / DSM 19411 / UW-3/Cx).